The chain runs to 60 residues: Large ribosomal subunit protein uL30 (60 aa).

This sequence belongs to the universal ribosomal protein uL30 family. As to quaternary structure, part of the 50S ribosomal subunit.

This is Large ribosomal subunit protein uL30 from Xanthobacter autotrophicus (strain ATCC BAA-1158 / Py2).